Here is a 497-residue protein sequence, read N- to C-terminus: WASH complex subunit homolog 1 (497 aa).

Residues 306-497 form a disordered region; it reads EASEPTEAEA…PPNFDDEEWD (192 aa). Residues 323–339 show a composition bias toward pro residues; that stretch reads LPPPPPPMKLDPSPQPA. Positions 341 to 350 are enriched in low complexity; that stretch reads TPVEITEIPP. Pro residues predominate over residues 351 to 372; it reads IISPPAPPPPPPPPPPPPPPQT. The WH2 domain maps to 390 to 412; it reads GRSDLMAAIRAAGGAGNAKLSRI.

It belongs to the WASH1 family. In terms of assembly, component of the WASH core complex. Component of the DHIC (ddl-1-containing hsf-1 inhibitory) complex, which contains at least ddl-1, ddl-2, hsb-1 and hsf-1. Within the complex, interacts with ddl-1. Formation of the DHIC may be dependent upon the Insulin/IGF-1-like signaling (IIS) mediated pathway. Expressed in several neurons located throughout the body.

Functionally, acts as a component of the WASH core complex that functions as a nucleation-promoting factor (NPF) at the surface of endosomes, where it recruits and activates the Arp2/3 complex to induce actin polymerization, playing a key role in the fission of tubules that serve as transport intermediates during endosome sorting. Acts as a component of the DHIC (ddl-1-containing hsf-1 inhibitory complex) which modulates lifespan by sequestering the heat shock transcription factor hsf-1 to negatively regulate its binding to DNA and its transcriptional activity. The polypeptide is WASH complex subunit homolog 1 (Caenorhabditis elegans).